Reading from the N-terminus, the 151-residue chain is Small ribosomal subunit protein uS15 (151 aa).

The segment at 1–20 (MARLHSGKRGSSGSTKPLRT) is disordered.

This sequence belongs to the universal ribosomal protein uS15 family. Part of the 30S ribosomal subunit.

The protein is Small ribosomal subunit protein uS15 of Methanococcus vannielii (strain ATCC 35089 / DSM 1224 / JCM 13029 / OCM 148 / SB).